The chain runs to 1026 residues: Multidrug resistance protein MdtC (1026 aa).

10 helical membrane passes run 12–34, 336–353, 360–382, 431–450, 463–485, 525–547, 853–875, 895–917, 948–970, and 985–1007; these read VATLLLTLAIALCGVLGFRLLPV, QSLIIAVALVILVVFLFL, AIPALAVPVSLIGTFAAMYLCGF, VGFTVLSMSLSLVAVFLPLL, FAVTLSVAIMISLLISLTLTPML, HARWVLLLLLGTIALNVWLYISI, LLLILAAIITVYIVLGILYESYV, LEWFGAPFSLVALIGIMLLIGIV, LLRFRPIMMTTLAALFGALPLVL, and TIVGGLLMSQVLTLYTTPVVYLF.

It belongs to the resistance-nodulation-cell division (RND) (TC 2.A.6) family. MdtC subfamily. As to quaternary structure, part of a tripartite efflux system composed of MdtA, MdtB and MdtC. MdtC forms a heteromultimer with MdtB.

Its subcellular location is the cell inner membrane. This chain is Multidrug resistance protein MdtC, found in Pectobacterium atrosepticum (strain SCRI 1043 / ATCC BAA-672) (Erwinia carotovora subsp. atroseptica).